We begin with the raw amino-acid sequence, 306 residues long: D-alanine--D-alanine ligase (306 aa).

Positions 107–300 (KEAYRAAGLP…FGQLCAWMVE (194 aa)) constitute an ATP-grasp domain. Residue 134 to 184 (MQPPYVVKPYNEGSSVGVYIVTEAANGPPVLAPDLPATLMVEEYVPGRELS) participates in ATP binding. 3 residues coordinate Mg(2+): D251, E267, and N269.

The protein belongs to the D-alanine--D-alanine ligase family. Requires Mg(2+) as cofactor. Mn(2+) serves as cofactor.

The protein localises to the cytoplasm. It catalyses the reaction 2 D-alanine + ATP = D-alanyl-D-alanine + ADP + phosphate + H(+). It functions in the pathway cell wall biogenesis; peptidoglycan biosynthesis. In terms of biological role, cell wall formation. The sequence is that of D-alanine--D-alanine ligase from Ruegeria pomeroyi (strain ATCC 700808 / DSM 15171 / DSS-3) (Silicibacter pomeroyi).